The primary structure comprises 490 residues: Lignostilbene-alpha,beta-dioxygenase isozyme III (490 aa).

Residues His-167, His-218, His-285, and His-477 each contribute to the Fe cation site.

Belongs to the carotenoid oxygenase family. Homodimer of two beta subunits. The cofactor is Fe(2+).

It carries out the reaction 1,2-bis(4-hydroxy-3-methoxyphenyl)ethylene + O2 = 2 vanillin. Activity is high with beta-5 type stilbene and minimal with beta-1 type stilbene. A 4-hydroxyl group and trans-stilbene structure is essential for the binding of substrates to the enzyme. Its function is as follows. Catalyzes the cleavage of the interphenyl double bond (C alpha-C beta) of lignin-derived polyphenolic diaryl-propane type compounds (Stilbene). In Sphingomonas paucimobilis (Pseudomonas paucimobilis), this protein is Lignostilbene-alpha,beta-dioxygenase isozyme III.